A 412-amino-acid chain; its full sequence is Exodeoxyribonuclease 7 large subunit (412 aa).

It belongs to the XseA family. Heterooligomer composed of large and small subunits.

It localises to the cytoplasm. The catalysed reaction is Exonucleolytic cleavage in either 5'- to 3'- or 3'- to 5'-direction to yield nucleoside 5'-phosphates.. Its function is as follows. Bidirectionally degrades single-stranded DNA into large acid-insoluble oligonucleotides, which are then degraded further into small acid-soluble oligonucleotides. This chain is Exodeoxyribonuclease 7 large subunit, found in Nostoc sp. (strain PCC 7120 / SAG 25.82 / UTEX 2576).